The primary structure comprises 461 residues: tRNA modification GTPase MnmE (461 aa).

Arginine 23, glutamate 84, and arginine 123 together coordinate (6S)-5-formyl-5,6,7,8-tetrahydrofolate. Residues 216 to 383 enclose the TrmE-type G domain; that stretch reads GARAALIGRP…LGATVARLLL (168 aa). A K(+)-binding site is contributed by asparagine 226. Residues 226–231, 245–251, and 270–273 contribute to the GTP site; these read NAGKSS, TPIPGTT, and DTAG. Residue serine 230 coordinates Mg(2+). 3 residues coordinate K(+): threonine 245, isoleucine 247, and threonine 250. Position 251 (threonine 251) interacts with Mg(2+). Lysine 461 contacts (6S)-5-formyl-5,6,7,8-tetrahydrofolate.

It belongs to the TRAFAC class TrmE-Era-EngA-EngB-Septin-like GTPase superfamily. TrmE GTPase family. As to quaternary structure, homodimer. Heterotetramer of two MnmE and two MnmG subunits. The cofactor is K(+).

Its subcellular location is the cytoplasm. In terms of biological role, exhibits a very high intrinsic GTPase hydrolysis rate. Involved in the addition of a carboxymethylaminomethyl (cmnm) group at the wobble position (U34) of certain tRNAs, forming tRNA-cmnm(5)s(2)U34. The protein is tRNA modification GTPase MnmE of Roseiflexus sp. (strain RS-1).